Consider the following 392-residue polypeptide: Phosphoglycerate kinase (392 aa).

Substrate contacts are provided by residues 21–23 (DFN), Arg-36, 59–62 (HLGR), Arg-113, and Arg-146. ATP-binding positions include Lys-197, Glu-319, and 345–348 (GGDT).

Belongs to the phosphoglycerate kinase family. As to quaternary structure, monomer.

It localises to the cytoplasm. The enzyme catalyses (2R)-3-phosphoglycerate + ATP = (2R)-3-phospho-glyceroyl phosphate + ADP. It participates in carbohydrate degradation; glycolysis; pyruvate from D-glyceraldehyde 3-phosphate: step 2/5. The sequence is that of Phosphoglycerate kinase from Francisella tularensis subsp. tularensis (strain FSC 198).